Consider the following 1073-residue polypeptide: Self-sufficient cytochrome P450 monooxygenase CYP505AG1 (1073 aa).

Cys409 serves as a coordination point for heme. One can recognise a Flavodoxin-like domain in the interval Val501 to Leu644. FMN contacts are provided by residues Ser507–Thr511 and Val588–Ala620. The region spanning His680–Pro909 is the FAD-binding FR-type domain.

It in the N-terminal section; belongs to the cytochrome P450 family. Requires FAD as cofactor. It depends on FMN as a cofactor. Heme serves as cofactor.

It catalyses the reaction 2 oxidized [cytochrome P450] + NADPH = 2 reduced [cytochrome P450] + NADP(+) + H(+). It carries out the reaction an organic molecule + reduced [NADPH--hemoprotein reductase] + O2 = an alcohol + oxidized [NADPH--hemoprotein reductase] + H2O + H(+). The enzyme catalyses dodecanoate + reduced [NADPH--hemoprotein reductase] + O2 = 10-hydroxydodecanoate + oxidized [NADPH--hemoprotein reductase] + H2O + H(+). The catalysed reaction is tetradecanoate + reduced [NADPH--hemoprotein reductase] + O2 = 12-hydroxytetradecanoate + oxidized [NADPH--hemoprotein reductase] + H2O + H(+). Its function is as follows. Self-sufficient cytochrome P450 monooxygenase that catalyzes the regioselective in-chain hydroxylation of alkanes, fatty alcohols, and fatty acids, giving sub-terminal hydroxylation by acting preferentially on the omega-2 position. Prefers fatty acids as substrates, since it hydroxylates the small amounts of dodecanoic acid formed in the presence of an excess of 1-dodecanol. The polypeptide is Self-sufficient cytochrome P450 monooxygenase CYP505AG1 (Oidiodendron maius (strain Zn)).